We begin with the raw amino-acid sequence, 122 residues long: Large ribosomal subunit protein uL18 (122 aa).

It belongs to the universal ribosomal protein uL18 family. In terms of assembly, part of the 50S ribosomal subunit; part of the 5S rRNA/L5/L18/L25 subcomplex. Contacts the 5S and 23S rRNAs.

Functionally, this is one of the proteins that bind and probably mediate the attachment of the 5S RNA into the large ribosomal subunit, where it forms part of the central protuberance. The protein is Large ribosomal subunit protein uL18 of Lachnoclostridium phytofermentans (strain ATCC 700394 / DSM 18823 / ISDg) (Clostridium phytofermentans).